The primary structure comprises 641 residues: Serine/threonine-protein kinase PK-1 (641 aa).

In terms of domain architecture, Protein kinase spans 18–280; the sequence is YRVDARIAVG…ARARDARARL (263 aa). ATP contacts are provided by residues 24–32 and Lys-47; that span reads IAVGGMATV. Asp-141 serves as the catalytic Proton acceptor. A disordered region spans residues 317-347; the sequence is LPVNEEDEGADAAHRTSRFRSPPPLPPRGRT. PASTA domains are found at residues 375–441, 442–508, 509–576, and 577–641; these read SGQF…TLSK, GPRT…LTVS, KGAP…TLSK, and GPEM…IEIR. Residues 469-494 are disordered; that stretch reads KPGMSTREFSDSVPAGSVISTEPGKG.

This sequence belongs to the protein kinase superfamily. Ser/Thr protein kinase family. In terms of processing, autophosphorylated on threonine residue(s).

The enzyme catalyses L-seryl-[protein] + ATP = O-phospho-L-seryl-[protein] + ADP + H(+). It catalyses the reaction L-threonyl-[protein] + ATP = O-phospho-L-threonyl-[protein] + ADP + H(+). The sequence is that of Serine/threonine-protein kinase PK-1 (spk1) from Streptomyces toyocaensis.